We begin with the raw amino-acid sequence, 194 residues long: ATP-dependent Clp protease proteolytic subunit (194 aa).

Ser-99 functions as the Nucleophile in the catalytic mechanism. The active site involves His-124.

It belongs to the peptidase S14 family. As to quaternary structure, fourteen ClpP subunits assemble into 2 heptameric rings which stack back to back to give a disk-like structure with a central cavity, resembling the structure of eukaryotic proteasomes.

The protein localises to the cytoplasm. The enzyme catalyses Hydrolysis of proteins to small peptides in the presence of ATP and magnesium. alpha-casein is the usual test substrate. In the absence of ATP, only oligopeptides shorter than five residues are hydrolyzed (such as succinyl-Leu-Tyr-|-NHMec, and Leu-Tyr-Leu-|-Tyr-Trp, in which cleavage of the -Tyr-|-Leu- and -Tyr-|-Trp bonds also occurs).. In terms of biological role, cleaves peptides in various proteins in a process that requires ATP hydrolysis. Has a chymotrypsin-like activity. Plays a major role in the degradation of misfolded proteins. The sequence is that of ATP-dependent Clp protease proteolytic subunit from Borrelia garinii subsp. bavariensis (strain ATCC BAA-2496 / DSM 23469 / PBi) (Borreliella bavariensis).